The following is a 54-amino-acid chain: Large ribosomal subunit protein bL33B (54 aa).

The protein belongs to the bacterial ribosomal protein bL33 family.

This is Large ribosomal subunit protein bL33B (rpmG2) from Streptomyces coelicolor (strain ATCC BAA-471 / A3(2) / M145).